We begin with the raw amino-acid sequence, 512 residues long: Tyrosine-protein kinase Lyn (512 aa).

Residues Met-1–Val-45 are disordered. The N-myristoyl glycine moiety is linked to residue Gly-2. Residue Cys-3 is the site of S-palmitoyl cysteine attachment. Residue Ser-19 is modified to Phosphoserine. The SH3 domain maps to Glu-63 to Thr-123. One can recognise an SH2 domain in the interval Trp-129–Cys-226. The residue at position 193 (Tyr-193) is a Phosphotyrosine. Ser-228 is subject to Phosphoserine. Positions Ile-247–Tyr-501 constitute a Protein kinase domain. ATP-binding positions include Leu-253–Val-261 and Lys-275. A phosphotyrosine mark is found at Tyr-306 and Tyr-316. The active-site Proton acceptor is the Asp-367. Tyr-397 is modified (phosphotyrosine; by autocatalysis). Phosphotyrosine occurs at positions 460 and 473. The residue at position 508 (Tyr-508) is a Phosphotyrosine; by autocatalysis, CSK and MATK.

Belongs to the protein kinase superfamily. Tyr protein kinase family. SRC subfamily. In terms of assembly, interacts with TEC. Interacts (via SH2 domain) with FLT3 (tyrosine phosphorylated). Interacts with LIME1 and with CD79A upon activation of the B-cell antigen receptor. Interacts with the B-cell receptor complex. Interacts with phosphorylated THEMIS2. Interacts with EPOR. Interacts with MS4A2/FCER1B. Interaction (via the SH2 and SH3 domains) with MUC1 is stimulated by IL7 and the subsequent phosphorylation increases the binding between MUC1 and CTNNB1/beta-catenin. Interacts with ADAM15. Interacts with NDFIP2 and more weakly with NDFIP1. Interacts with FASLG. Interacts with KIT. Interacts with HCLS1. Interacts with FCGR2B. Interacts with FCGR1A; the interaction may be indirect. Interacts with CD19, CD22, CD79A and CD79B. Interacts (via SH3 domain) with CBLC, PPP1R15A and PDE4A. Interacts with TGFB1I1. Interacts (via SH3 domain) with PIK3R1, the regulatory subunit of phosphatidylinositol 3-kinase; this interaction enhances phosphatidylinositol 3-kinase activity. Interacts with CSF2RB, the common subunit of the IL3, IL5 and CSF2 receptors. Interacts with PAG1; identified in a complex with PAG1 and STAT3. Interacts with ABL1. Interacts with PTPN6/SHP-1. Interacts (via SH3 domain) with SCIMP (via proline-rich region). This interaction facilitates the phosphorylation of SCIMP on 'Tyr-96', which enhances binding of SCIMP to TLR4, and consequently the phosphorylation of TLR4 in response to stimulation by lipopolysaccharide in macrophages. Interacts with LPXN (via LD motif 3) and the interaction is induced upon B-cell antigen receptor (BCR) activation. Interacts (via SH3-domain) with ANKRD54 (via ankyrin repeat region) in an activation-independent status of LYN. Forms a multiprotein complex with ANKRD54 and HCLS1. Interacts (via SH2 and SH3 domains) with UNC119; leading to LYN activation. Interacts with CD36. Interacts with LYN. Interacts with SKAP1 and FYB1; this interaction promotes the phosphorylation of CLNK. Interacts with BCAR1/CAS and NEDD9/HEF1. In terms of processing, ubiquitinated by CBL, leading to its degradation. Autophosphorylated. Phosphorylated on tyrosine residues in response to KIT signaling. Phosphorylation at Tyr-397 is required for optimal activity. Phosphorylation at Tyr-508 inhibits kinase activity. Phosphorylated at Tyr-508 by CSK. Dephosphorylated by PTPRC/CD45. Becomes rapidly phosphorylated upon activation of the B-cell receptor and the immunoglobulin receptor FCGR1A. Phosphorylated in response to ITGB1 in B-cells. Detected in bone marrow-derived monocytes and macrophages (at protein level). Expressed predominantly in B-lymphoid and myeloid cells.

The protein resides in the cell membrane. It localises to the nucleus. Its subcellular location is the cytoplasm. The protein localises to the perinuclear region. It is found in the golgi apparatus. The protein resides in the membrane. The catalysed reaction is L-tyrosyl-[protein] + ATP = O-phospho-L-tyrosyl-[protein] + ADP + H(+). Its activity is regulated as follows. Subject to autoinhibition, mediated by intramolecular interactions between the SH2 domain and the C-terminal phosphotyrosine. Phosphorylation at Tyr-397 is required for optimal activity. Phosphorylated by CSK at Tyr-508; phosphorylation at Tyr-508 inhibits kinase activity. Kinase activity is modulated by dephosphorylation by PTPRC/CD45. Inhibited by dasatinib, PP2, and SU6656. Non-receptor tyrosine-protein kinase that transmits signals from cell surface receptors and plays an important role in the regulation of innate and adaptive immune responses, hematopoiesis, responses to growth factors and cytokines, integrin signaling, but also responses to DNA damage and genotoxic agents. Functions primarily as negative regulator, but can also function as activator, depending on the context. Required for the initiation of the B-cell response, but also for its down-regulation and termination. Plays an important role in the regulation of B-cell differentiation, proliferation, survival and apoptosis, and is important for immune self-tolerance. Acts downstream of several immune receptors, including the B-cell receptor, CD79A, CD79B, CD5, CD19, CD22, FCER1, FCGR2, FCGR1A, TLR2 and TLR4. Plays a role in the inflammatory response to bacterial lipopolysaccharide. Mediates the responses to cytokines and growth factors in hematopoietic progenitors, platelets, erythrocytes, and in mature myeloid cells, such as dendritic cells, neutrophils and eosinophils. Acts downstream of EPOR, KIT, MPL, the chemokine receptor CXCR4, as well as the receptors for IL3, IL5 and CSF2. Plays an important role in integrin signaling. Regulates cell proliferation, survival, differentiation, migration, adhesion, degranulation, and cytokine release. Involved in the regulation of endothelial activation, neutrophil adhesion and transendothelial migration. Down-regulates signaling pathways by phosphorylation of immunoreceptor tyrosine-based inhibitory motifs (ITIM), that then serve as binding sites for phosphatases, such as PTPN6/SHP-1, PTPN11/SHP-2 and INPP5D/SHIP-1, that modulate signaling by dephosphorylation of kinases and their substrates. Phosphorylates LIME1 in response to CD22 activation. Phosphorylates BTK, CBL, CD5, CD19, CD72, CD79A, CD79B, CSF2RB, DOK1, HCLS1, MS4A2/FCER1B, SYK and TEC. Phosphorylates PIRB at Tyr-794 and Tyr-824, which is required for PIRB interaction with PTPN6/SHP-1 and PTPN11/SHP-2. Promotes phosphorylation of SIRPA, PTPN6/SHP-1, PTPN11/SHP-2 and INPP5D/SHIP-1. Required for rapid phosphorylation of FER in response to FCER1 activation. Mediates KIT phosphorylation. Acts as an effector of EPOR (erythropoietin receptor) in controlling KIT expression and may play a role in erythroid differentiation during the switch between proliferation and maturation. Depending on the context, activates or inhibits several signaling cascades. Regulates phosphatidylinositol 3-kinase activity and AKT1 activation. Regulates activation of the MAP kinase signaling cascade, including activation of MAP2K1/MEK1, MAPK1/ERK2, MAPK3/ERK1, MAPK8/JNK1 and MAPK9/JNK2. Mediates activation of STAT5A and/or STAT5B. Phosphorylates LPXN on 'Tyr-72'. Kinase activity facilitates TLR4-TLR6 heterodimerization and signal initiation. Phosphorylates SCIMP on 'Tyr-96'; this enhances binding of SCIMP to TLR4, promoting the phosphorylation of TLR4, and a selective cytokine response to lipopolysaccharide in macrophages. Phosphorylates CLNK. Phosphorylates BCAR1/CAS and NEDD9/HEF1. This chain is Tyrosine-protein kinase Lyn (Lyn), found in Mus musculus (Mouse).